The chain runs to 424 residues: Histidine--tRNA ligase (424 aa).

This sequence belongs to the class-II aminoacyl-tRNA synthetase family. As to quaternary structure, homodimer.

The protein resides in the cytoplasm. It catalyses the reaction tRNA(His) + L-histidine + ATP = L-histidyl-tRNA(His) + AMP + diphosphate + H(+). The chain is Histidine--tRNA ligase from Salmonella gallinarum (strain 287/91 / NCTC 13346).